A 119-amino-acid chain; its full sequence is Acidic phospholipase A2 DE-II (119 aa).

7 disulfide bridges follow: Cys11-Cys72, Cys26-Cys118, Cys28-Cys44, Cys43-Cys99, Cys50-Cys92, Cys60-Cys85, and Cys79-Cys90. Residues Tyr27, Gly29, and Gly31 each contribute to the Ca(2+) site. His47 is an active-site residue. Asp48 serves as a coordination point for Ca(2+). Residue Asp93 is part of the active site.

The protein belongs to the phospholipase A2 family. Group I subfamily. D49 sub-subfamily. It depends on Ca(2+) as a cofactor. As to expression, expressed by the venom gland.

It is found in the secreted. It catalyses the reaction a 1,2-diacyl-sn-glycero-3-phosphocholine + H2O = a 1-acyl-sn-glycero-3-phosphocholine + a fatty acid + H(+). Its function is as follows. PLA2 catalyzes the calcium-dependent hydrolysis of the 2-acyl groups in 3-sn-phosphoglycerides. This is Acidic phospholipase A2 DE-II from Naja melanoleuca (Forest cobra).